The chain runs to 322 residues: Acetyl-coenzyme A carboxylase carboxyl transferase subunit alpha (322 aa).

A CoA carboxyltransferase C-terminal domain is found at 30–293 (ALDISAEITR…RQALQESLRK (264 aa)).

The protein belongs to the AccA family. In terms of assembly, acetyl-CoA carboxylase is a heterohexamer composed of biotin carboxyl carrier protein (AccB), biotin carboxylase (AccC) and two subunits each of ACCase subunit alpha (AccA) and ACCase subunit beta (AccD).

The protein localises to the cytoplasm. The catalysed reaction is N(6)-carboxybiotinyl-L-lysyl-[protein] + acetyl-CoA = N(6)-biotinyl-L-lysyl-[protein] + malonyl-CoA. The protein operates within lipid metabolism; malonyl-CoA biosynthesis; malonyl-CoA from acetyl-CoA: step 1/1. Its function is as follows. Component of the acetyl coenzyme A carboxylase (ACC) complex. First, biotin carboxylase catalyzes the carboxylation of biotin on its carrier protein (BCCP) and then the CO(2) group is transferred by the carboxyltransferase to acetyl-CoA to form malonyl-CoA. This Nitrosomonas eutropha (strain DSM 101675 / C91 / Nm57) protein is Acetyl-coenzyme A carboxylase carboxyl transferase subunit alpha.